A 142-amino-acid chain; its full sequence is Type 3 secretion system pilotin (142 aa).

Positions 1-23 are cleaved as a signal peptide; that stretch reads MIRHGSNKLKIFILSILLLTLSG. A lipid anchor (N-palmitoyl cysteine) is attached at Cys-24. A lipid anchor (S-diacylglycerol cysteine) is attached at Cys-24.

This sequence belongs to the MxiM family. As to quaternary structure, monomer. Interacts with the secretin MxiD/SctC.

It localises to the cell outer membrane. Involved in the synthesis of the type III secretion system (T3SS), also called injectisome, which is used to inject bacterial effector proteins into eukaryotic host cells. Pilot protein that is required for the proper localization of the secretin MxiD/SctC in the outer membrane. Also influences both MxiD/SctC multimerization and stability. Required for both Ipa translocation and tissue culture cell invasion. Binds lipids. The sequence is that of Type 3 secretion system pilotin from Shigella flexneri.